Reading from the N-terminus, the 1367-residue chain is DNA polymerase III PolC-type (1367 aa).

One can recognise an Exonuclease domain in the interval 358 to 513; that stretch reads FVVLDFETTG…DDARVTAQVF (156 aa).

The protein belongs to the DNA polymerase type-C family. PolC subfamily.

Its subcellular location is the cytoplasm. The catalysed reaction is DNA(n) + a 2'-deoxyribonucleoside 5'-triphosphate = DNA(n+1) + diphosphate. In terms of biological role, required for replicative DNA synthesis. This DNA polymerase also exhibits 3' to 5' exonuclease activity. This chain is DNA polymerase III PolC-type, found in Thermotoga maritima (strain ATCC 43589 / DSM 3109 / JCM 10099 / NBRC 100826 / MSB8).